The sequence spans 424 residues: Endo-beta-1,4-galactanase (424 aa).

The first 26 residues, 1–26 (MKNVLAVFVVLIFVLGAFGTSGPAEA), serve as a signal peptide directing secretion. Position 142–145 (142–145 (DPAK)) interacts with substrate. Glu-190 serves as the catalytic Proton donor. Residues 229 to 230 (TN) and His-263 contribute to the substrate site. Glu-288 (nucleophile) is an active-site residue. Position 292 (Thr-292) interacts with substrate. Ca(2+) is bound by residues Asp-297, Asp-299, His-301, and Asn-303. Residues Lys-307 and Asp-384 each coordinate substrate. 2 residues coordinate Ca(2+): Ser-392 and Asp-395.

The protein belongs to the glycosyl hydrolase 53 family. It depends on Ca(2+) as a cofactor.

The catalysed reaction is The enzyme specifically hydrolyzes (1-&gt;4)-beta-D-galactosidic linkages in type I arabinogalactans.. Involved in galactan degradation. Degrades arabinose-free galactan to galactooligosaccharides, producing galactotetraose as the main product along with galactotriose, galactobiose, and galactose. May hydrolyze the beta-1,4-galactan linkages of the galactan portion of arabinogalactan type I, a pectic plant polysaccharide from which most of the arabinose has been removed. The protein is Endo-beta-1,4-galactanase (ganB) of Bacillus licheniformis (strain ATCC 14580 / DSM 13 / JCM 2505 / CCUG 7422 / NBRC 12200 / NCIMB 9375 / NCTC 10341 / NRRL NRS-1264 / Gibson 46).